The primary structure comprises 885 residues: Alanine--tRNA ligase (885 aa).

Zn(2+) is bound by residues histidine 564, histidine 568, cysteine 676, and histidine 680.

The protein belongs to the class-II aminoacyl-tRNA synthetase family. The cofactor is Zn(2+).

Its subcellular location is the cytoplasm. The enzyme catalyses tRNA(Ala) + L-alanine + ATP = L-alanyl-tRNA(Ala) + AMP + diphosphate. In terms of biological role, catalyzes the attachment of alanine to tRNA(Ala) in a two-step reaction: alanine is first activated by ATP to form Ala-AMP and then transferred to the acceptor end of tRNA(Ala). Also edits incorrectly charged Ser-tRNA(Ala) and Gly-tRNA(Ala) via its editing domain. The sequence is that of Alanine--tRNA ligase from Brucella anthropi (strain ATCC 49188 / DSM 6882 / CCUG 24695 / JCM 21032 / LMG 3331 / NBRC 15819 / NCTC 12168 / Alc 37) (Ochrobactrum anthropi).